A 304-amino-acid chain; its full sequence is UDP-N-acetylenolpyruvoylglucosamine reductase (304 aa).

An FAD-binding PCMH-type domain is found at 33-198 (KVGGPVDILL…LEVTFNLEKG (166 aa)). Arg-177 is a catalytic residue. Ser-227 functions as the Proton donor in the catalytic mechanism. Glu-297 is a catalytic residue.

This sequence belongs to the MurB family. FAD serves as cofactor.

It localises to the cytoplasm. It catalyses the reaction UDP-N-acetyl-alpha-D-muramate + NADP(+) = UDP-N-acetyl-3-O-(1-carboxyvinyl)-alpha-D-glucosamine + NADPH + H(+). It participates in cell wall biogenesis; peptidoglycan biosynthesis. In terms of biological role, cell wall formation. The polypeptide is UDP-N-acetylenolpyruvoylglucosamine reductase (Clostridium kluyveri (strain NBRC 12016)).